Consider the following 263-residue polypeptide: Lens fiber major intrinsic protein (263 aa).

Topologically, residues 1 to 9 (MWELRSASF) are cytoplasmic. Residues 10–29 (WRAIFAEFFATLFYVFFGLG) form a helical membrane-spanning segment. At 30–41 (SSLRWAPGPLHV) the chain is on the extracellular side. The helical transmembrane segment at 42 to 59 (LQVALAFGLALATLVQTV) threads the bilayer. At 60–61 (GH) the chain is on the cytoplasmic side. The discontinuously helical intramembrane region spans 62-77 (ISGAHVNPAVTFAFLV). The short motif at 68–70 (NPA) is the NPA 1 element. The Cytoplasmic segment spans residues 78 to 82 (GSQMS). The helical transmembrane segment at 83–106 (LLRAFCYIAAQLLGAVAGAAVLYS) threads the bilayer. Residues 107 to 127 (VTPPAVRGNLALNTLHAGVSV) lie on the Extracellular side of the membrane. The helical transmembrane segment at 128–148 (GQATTVEIFLTLQFVLCIFAT) threads the bilayer. At 149-156 (YDERRNGR) the chain is on the cytoplasmic side. The helical transmembrane segment at 157–175 (MGSVALAVGFSLTLGHLFG) threads the bilayer. Residues 176–178 (MYY) lie on the Extracellular side of the membrane. The discontinuously helical intramembrane region spans 179–193 (TGAGMNPARSFAPAI). Residues 184-186 (NPA) carry the NPA 2 motif. At 194–200 (LTRNFSN) the chain is on the extracellular side. Residues 201 to 222 (HWVYWVGPIIGGGLGSLLYDFL) traverse the membrane as a helical segment. Topologically, residues 223–263 (LFPRLKSVSERLSILKGARPSDSNGQPEGTGEPVELKTQAL) are cytoplasmic. The interaction with CALM stretch occupies residues 227–237 (LKSVSERLSIL). Ser235, Ser243, and Ser245 each carry phosphoserine. The tract at residues 240 to 263 (ARPSDSNGQPEGTGEPVELKTQAL) is disordered. Asn246 is modified (deamidated asparagine).

It belongs to the MIP/aquaporin (TC 1.A.8) family. Homotetramer; each monomer provides an independent water pore. Two homotetramers on opposing membranes can dimerize, forming a cell-cell junction. Interacts with CALM; the calcium-calmodulin/CALM complex interacts with the cytoplasmic domains of two aquaporins, leading to channel closure. Interacts with BFSP1 (via C-terminus); prevents calcium-dependent inhibition of the water channel activity. In terms of processing, subject to partial proteolytic cleavage in the eye lens core. Partial proteolysis promotes interactions between tetramers from adjoining membranes. Fatty acylated at Met-1 and Lys-238. The acyl modifications, in decreasing order of ion abundance, are: oleoyl (C18:1) &gt; palmitoyl (C16:0) &gt; stearoyl (C18:0) &gt; eicosenoyl (C20:1) &gt; dihomo-gamma-linolenoyl (C20:3) &gt; palmitoleoyl (C16:1) &gt; eicosadienoyl (C20:2).

The protein localises to the cell membrane. It localises to the cell junction. The enzyme catalyses H2O(in) = H2O(out). With respect to regulation, the water channel activity is inhibited by calcium through calmodulin/CALM. In terms of biological role, aquaporins form homotetrameric transmembrane channels, with each monomer independently mediating water transport across the plasma membrane along its osmotic gradient. Specifically expressed in lens fiber cells, this aquaporin is crucial for maintaining lens water homeostasis and transparency. Beyond water permeability, it also acts as a cell-to-cell adhesion molecule, forming thin junctions between lens fiber cells that are essential for maintaining the ordered structure and transparency of the lens. In Rattus norvegicus (Rat), this protein is Lens fiber major intrinsic protein.